Here is a 503-residue protein sequence, read N- to C-terminus: Cytochrome P450 3A15 (503 aa).

Cys-442 contributes to the heme binding site.

The protein belongs to the cytochrome P450 family. Heme is required as a cofactor.

It is found in the endoplasmic reticulum membrane. It localises to the microsome membrane. The catalysed reaction is an organic molecule + reduced [NADPH--hemoprotein reductase] + O2 = an alcohol + oxidized [NADPH--hemoprotein reductase] + H2O + H(+). In terms of biological role, cytochromes P450 are a group of heme-thiolate monooxygenases. In liver microsomes, this enzyme is involved in an NADPH-dependent electron transport pathway. It oxidizes a variety of structurally unrelated compounds, including steroids, fatty acids, and xenobiotics. In Cavia porcellus (Guinea pig), this protein is Cytochrome P450 3A15 (CYP3A15).